Reading from the N-terminus, the 669-residue chain is CoB--CoM heterodisulfide reductase iron-sulfur subunit A 1 (669 aa).

An FAD-binding site is contributed by 153-176 (GGGIAGIQAALDLADQGFKVYLVE). A non-standard amino acid (selenocysteine) is located at residue U200. 4Fe-4S ferredoxin-type domains are found at residues 239–270 (KKPRYVDEDACTGCGVCAEVCPIEVPNEFDLG), 287–318 (LVYTIDMEHCIQCGLCEEACPQDPPAIDFDQE), 584–613 (ITATVDEDVCGGCGACAQVCPFDAIEMVEK), and 617–646 (RVAEVQDVACQGCGQCAAACPSGAMQLRYY). [4Fe-4S] cluster is bound by residues C249, C252, C255, C259, C296, C299, C302, C306, C593, C596, C599, C603, C626, C629, C632, and C636.

It belongs to the HdrA family. The ferredoxin:CoB-CoM heterodisulfide reductase is composed of three subunits; HdrA, HdrB and HdrC. Requires [4Fe-4S] cluster as cofactor. It depends on FAD as a cofactor.

It participates in cofactor metabolism; coenzyme M-coenzyme B heterodisulfide reduction; coenzyme B and coenzyme M from coenzyme M-coenzyme B heterodisulfide: step 1/1. Part of a complex that catalyzes the reversible reduction of CoM-S-S-CoB to the thiol-coenzymes H-S-CoM (coenzyme M) and H-S-CoB (coenzyme B). The polypeptide is CoB--CoM heterodisulfide reductase iron-sulfur subunit A 1 (hdrA1) (Methanopyrus kandleri (strain AV19 / DSM 6324 / JCM 9639 / NBRC 100938)).